The sequence spans 294 residues: Glycine--tRNA ligase alpha subunit (294 aa).

The protein belongs to the class-II aminoacyl-tRNA synthetase family. As to quaternary structure, tetramer of two alpha and two beta subunits.

It localises to the cytoplasm. The catalysed reaction is tRNA(Gly) + glycine + ATP = glycyl-tRNA(Gly) + AMP + diphosphate. This Trichodesmium erythraeum (strain IMS101) protein is Glycine--tRNA ligase alpha subunit.